We begin with the raw amino-acid sequence, 429 residues long: Patatin-like phospholipase domain-containing protein 5 (429 aa).

Positions 12-181 constitute a PNPLA domain; that stretch reads LSFSGAGYLG…SNNLPFADCP (170 aa). Positions 16 to 21 match the GXGXXG motif; that stretch reads GAGYLG. The GXSXG signature appears at 47 to 51; sequence GSSSG. S49 functions as the Nucleophile in the catalytic mechanism. D168 (proton acceptor) is an active-site residue. The short motif at 168-170 is the DGA/G element; that stretch reads DGA.

As to expression, expressed in brain and pituitary gland.

It carries out the reaction a triacylglycerol + H2O = a diacylglycerol + a fatty acid + H(+). Has abundant triacylglycerol lipase activity. The chain is Patatin-like phospholipase domain-containing protein 5 from Homo sapiens (Human).